The following is a 275-amino-acid chain: Lectin DB58 (275 aa).

The signal sequence occupies residues 1-22; the sequence is MASSTVSVVLSLFLLLLTQAYS. Asn-34 and Asn-101 each carry an N-linked (GlcNAc...) asparagine glycan.

Belongs to the leguminous lectin family. As to quaternary structure, heterodimer, composed of an alpha and a beta subunit derived from a single precursor. Leu-264 is missing in a major portion of the beta subunit, suggesting an origin by sequential removal of amino acids rather than a processing by endoproteolytic cleavage.

Functionally, metalloglycoprotein, containing Ca, Mg, Mn, and Zn and the carbohydrates galactose, glucosamine, mannose, and fucose. It agglutinates erythrocytes of blood group A1. In Vigna unguiculata subsp. cylindrica (Horse gram), this protein is Lectin DB58.